The sequence spans 146 residues: uncharacterized protein (146 aa).

The region spanning 7–146 (LQINYKTDEL…EGHDILIWNP (140 aa)) is the N-acetyltransferase domain.

This is an uncharacterized protein from Staphylococcus epidermidis (strain ATCC 12228 / FDA PCI 1200).